Here is a 216-residue protein sequence, read N- to C-terminus: N-acetyltransferase 9-like protein (216 aa).

Positions 68–215 (VLLNENDEAK…DHVELELMRT (148 aa)) constitute an N-acetyltransferase domain.

Belongs to the acetyltransferase family. GNAT subfamily.

The protein resides in the cytoplasm. It is found in the nucleus. This is N-acetyltransferase 9-like protein from Schizosaccharomyces pombe (strain 972 / ATCC 24843) (Fission yeast).